Consider the following 266-residue polypeptide: Undecaprenyl-diphosphatase (266 aa).

8 consecutive transmembrane segments (helical) span residues 1–21 (MDTF…FLPI), 39–59 (QGLS…VMYF), 87–107 (WWII…KGFI), 111–131 (LRNI…LWWA), 144–164 (VGWK…IPGT), 183–203 (AAAR…AILV), 218–238 (ALGL…HYFL), and 246–266 (MTPF…FIFL).

It belongs to the UppP family.

It localises to the cell inner membrane. It carries out the reaction di-trans,octa-cis-undecaprenyl diphosphate + H2O = di-trans,octa-cis-undecaprenyl phosphate + phosphate + H(+). Its function is as follows. Catalyzes the dephosphorylation of undecaprenyl diphosphate (UPP). Confers resistance to bacitracin. The chain is Undecaprenyl-diphosphatase from Shewanella piezotolerans (strain WP3 / JCM 13877).